Reading from the N-terminus, the 894-residue chain is Translation initiation factor IF-2 (894 aa).

Residues 25–304 (ADAGMNKASS…KPTSMQHGFD (280 aa)) form a disordered region. 5 stretches are compositionally biased toward basic and acidic residues: residues 33–44 (SSDHVSDEEKQK), 52–62 (EHGDKSGESEP), 101–174 (STIE…KEMN), 184–239 (AKKE…ENSD), and 247–263 (YARE…EGGA). The span at 283–293 (RGGKGRNKGKL) shows a compositional bias: basic residues. Residues 393-562 (PRAPVVTIMG…LLQSEVLELT (170 aa)) form the tr-type G domain. Positions 402–409 (GHVDHGKT) are G1. Residue 402 to 409 (GHVDHGKT) participates in GTP binding. Residues 427 to 431 (GITQH) are G2. The segment at 448-451 (DTPG) is G3. Residues 448–452 (DTPGH) and 502–505 (NKID) each bind GTP. The G4 stretch occupies residues 502 to 505 (NKID). A G5 region spans residues 538–540 (SAK).

The protein belongs to the TRAFAC class translation factor GTPase superfamily. Classic translation factor GTPase family. IF-2 subfamily.

Its subcellular location is the cytoplasm. In terms of biological role, one of the essential components for the initiation of protein synthesis. Protects formylmethionyl-tRNA from spontaneous hydrolysis and promotes its binding to the 30S ribosomal subunits. Also involved in the hydrolysis of GTP during the formation of the 70S ribosomal complex. This Vibrio campbellii (strain ATCC BAA-1116) protein is Translation initiation factor IF-2.